Reading from the N-terminus, the 130-residue chain is UPF0225 protein CE1570 (130 aa).

Belongs to the UPF0225 family.

The chain is UPF0225 protein CE1570 from Corynebacterium efficiens (strain DSM 44549 / YS-314 / AJ 12310 / JCM 11189 / NBRC 100395).